Reading from the N-terminus, the 88-residue chain is Elongation factor 1-beta (88 aa).

This sequence belongs to the EF-1-beta/EF-1-delta family.

In terms of biological role, promotes the exchange of GDP for GTP in EF-1-alpha/GDP, thus allowing the regeneration of EF-1-alpha/GTP that could then be used to form the ternary complex EF-1-alpha/GTP/AAtRNA. The sequence is that of Elongation factor 1-beta (ef1b) from Thermoplasma volcanium (strain ATCC 51530 / DSM 4299 / JCM 9571 / NBRC 15438 / GSS1).